Here is a 376-residue protein sequence, read N- to C-terminus: Lipid-A-disaccharide synthase (376 aa).

It belongs to the LpxB family.

The enzyme catalyses a lipid X + a UDP-2-N,3-O-bis[(3R)-3-hydroxyacyl]-alpha-D-glucosamine = a lipid A disaccharide + UDP + H(+). It functions in the pathway bacterial outer membrane biogenesis; LPS lipid A biosynthesis. In terms of biological role, condensation of UDP-2,3-diacylglucosamine and 2,3-diacylglucosamine-1-phosphate to form lipid A disaccharide, a precursor of lipid A, a phosphorylated glycolipid that anchors the lipopolysaccharide to the outer membrane of the cell. The protein is Lipid-A-disaccharide synthase of Hydrogenovibrio crunogenus (strain DSM 25203 / XCL-2) (Thiomicrospira crunogena).